The chain runs to 160 residues: Transcription elongation factor GreA (160 aa).

Residues 49 to 75 (SEYDEAKNDQAFTEGRIIQLENMLKNA) adopt a coiled-coil conformation.

Belongs to the GreA/GreB family.

Functionally, necessary for efficient RNA polymerase transcription elongation past template-encoded arresting sites. The arresting sites in DNA have the property of trapping a certain fraction of elongating RNA polymerases that pass through, resulting in locked ternary complexes. Cleavage of the nascent transcript by cleavage factors such as GreA or GreB allows the resumption of elongation from the new 3'terminus. GreA releases sequences of 2 to 3 nucleotides. This chain is Transcription elongation factor GreA, found in Clostridium beijerinckii (strain ATCC 51743 / NCIMB 8052) (Clostridium acetobutylicum).